A 431-amino-acid polypeptide reads, in one-letter code: Histidine--tRNA ligase (431 aa).

This sequence belongs to the class-II aminoacyl-tRNA synthetase family. In terms of assembly, homodimer.

The protein resides in the cytoplasm. It carries out the reaction tRNA(His) + L-histidine + ATP = L-histidyl-tRNA(His) + AMP + diphosphate + H(+). This chain is Histidine--tRNA ligase, found in Neisseria meningitidis serogroup B (strain ATCC BAA-335 / MC58).